The sequence spans 163 residues: Flagellar assembly factor FliW (163 aa).

Residues 136–156 show a composition bias toward basic and acidic residues; sequence PFFETSEKKQSGLQRLERQPE. The disordered stretch occupies residues 136-163; sequence PFFETSEKKQSGLQRLERQPEKSVPPAG.

Belongs to the FliW family. In terms of assembly, interacts with translational regulator CsrA and flagellin(s).

It localises to the cytoplasm. Acts as an anti-CsrA protein, binds CsrA and prevents it from repressing translation of its target genes, one of which is flagellin. Binds to flagellin and participates in the assembly of the flagellum. This Geotalea uraniireducens (strain Rf4) (Geobacter uraniireducens) protein is Flagellar assembly factor FliW.